A 326-amino-acid chain; its full sequence is 4-hydroxythreonine-4-phosphate dehydrogenase (326 aa).

Thr132 is a binding site for substrate. 3 residues coordinate a divalent metal cation: His160, His205, and His260. Substrate-binding residues include Lys268, Asn277, and Arg286.

The protein belongs to the PdxA family. In terms of assembly, homodimer. The cofactor is Zn(2+). Requires Mg(2+) as cofactor. Co(2+) is required as a cofactor.

It is found in the cytoplasm. It catalyses the reaction 4-(phosphooxy)-L-threonine + NAD(+) = 3-amino-2-oxopropyl phosphate + CO2 + NADH. Its pathway is cofactor biosynthesis; pyridoxine 5'-phosphate biosynthesis; pyridoxine 5'-phosphate from D-erythrose 4-phosphate: step 4/5. Its function is as follows. Catalyzes the NAD(P)-dependent oxidation of 4-(phosphooxy)-L-threonine (HTP) into 2-amino-3-oxo-4-(phosphooxy)butyric acid which spontaneously decarboxylates to form 3-amino-2-oxopropyl phosphate (AHAP). The protein is 4-hydroxythreonine-4-phosphate dehydrogenase of Stenotrophomonas maltophilia (strain K279a).